A 192-amino-acid polypeptide reads, in one-letter code: MKKLFLIIGAPGSGKTTDAELIAERNSDKIVHYSTGDLLRAEVASGSELGQTIKSYIDNGNLVPLEIVINTIKSAIEKAPKDIVLIDGFPRSVEQMKALDEMLKNTDDIELVSVIEVEVSEDVARERVLGRARGADDNVEVFNNRMKVFTEPLKDIQDFYSAQGKLIKINGERTIEEIVDEMEQVIKEKAGI.

An ATP-binding site is contributed by 12 to 17 (GSGKTT). An NMP region spans residues 34–63 (STGDLLRAEVASGSELGQTIKSYIDNGNLV). AMP is bound by residues Thr-35, Arg-40, 61–63 (NLV), 88–91 (GFPR), and Gln-95. The segment at 130–136 (GRARGAD) is LID. Residue Arg-131 coordinates ATP. Positions 133 and 145 each coordinate AMP. Arg-173 is an ATP binding site.

This sequence belongs to the adenylate kinase family. In terms of assembly, monomer.

It localises to the cytoplasm. It catalyses the reaction AMP + ATP = 2 ADP. It participates in purine metabolism; AMP biosynthesis via salvage pathway; AMP from ADP: step 1/1. Catalyzes the reversible transfer of the terminal phosphate group between ATP and AMP. Plays an important role in cellular energy homeostasis and in adenine nucleotide metabolism. This chain is Adenylate kinase, found in Nautilia profundicola (strain ATCC BAA-1463 / DSM 18972 / AmH).